The following is a 250-amino-acid chain: ATP synthase subunit a (250 aa).

The next 6 membrane-spanning stretches (helical) occupy residues 31 to 51, 85 to 105, 115 to 135, 144 to 164, 194 to 214, and 217 to 237; these read SAYM…GMAG, FFPL…IGII, LIVT…YGLY, LFVP…IEVI, FVGM…LPLG, and VAVT…FTIL.

This sequence belongs to the ATPase A chain family. F-type ATPases have 2 components, CF(1) - the catalytic core - and CF(0) - the membrane proton channel. CF(1) has five subunits: alpha(3), beta(3), gamma(1), delta(1), epsilon(1). CF(0) has four main subunits: a, b, b' and c.

It is found in the cell inner membrane. Key component of the proton channel; it plays a direct role in the translocation of protons across the membrane. The polypeptide is ATP synthase subunit a (Rhodopseudomonas palustris (strain BisB5)).